The chain runs to 155 residues: Ribosomal RNA large subunit methyltransferase H (155 aa).

S-adenosyl-L-methionine contacts are provided by residues Ile-71, Gly-103, and 122 to 127; that span reads FGRMVW.

It belongs to the RNA methyltransferase RlmH family. Homodimer.

The protein localises to the cytoplasm. It carries out the reaction pseudouridine(1915) in 23S rRNA + S-adenosyl-L-methionine = N(3)-methylpseudouridine(1915) in 23S rRNA + S-adenosyl-L-homocysteine + H(+). In terms of biological role, specifically methylates the pseudouridine at position 1915 (m3Psi1915) in 23S rRNA. The chain is Ribosomal RNA large subunit methyltransferase H from Cereibacter sphaeroides (strain ATCC 17025 / ATH 2.4.3) (Rhodobacter sphaeroides).